The primary structure comprises 183 residues: Putative lipoprotein LpqE (183 aa).

Residues 1 to 30 (MSRFKISLPALATRVAVLGFLTLMASVLGG) form the signal peptide. Cys-31 is lipidated: N-palmitoyl cysteine. Cys-31 is lipidated: S-diacylglycerol cysteine.

Its subcellular location is the cell membrane. The chain is Putative lipoprotein LpqE (lpqE) from Mycobacterium leprae (strain TN).